Reading from the N-terminus, the 800-residue chain is Phenylalanine--tRNA ligase beta subunit (800 aa).

Residues 39–154 (TKDIKKLVVG…EAVKPGTDAL (116 aa)) enclose the tRNA-binding domain. Residues 408–483 (SFVTPIKITA…RIYGYDDIPS (76 aa)) form the B5 domain. Aspartate 461, aspartate 467, glutamate 470, and glutamate 471 together coordinate Mg(2+). The FDX-ACB domain occupies 708–800 (PRFPGVTRDI…ALKKHGAIIR (93 aa)).

It belongs to the phenylalanyl-tRNA synthetase beta subunit family. Type 1 subfamily. Tetramer of two alpha and two beta subunits. Requires Mg(2+) as cofactor.

The protein resides in the cytoplasm. It catalyses the reaction tRNA(Phe) + L-phenylalanine + ATP = L-phenylalanyl-tRNA(Phe) + AMP + diphosphate + H(+). In Staphylococcus epidermidis (strain ATCC 35984 / DSM 28319 / BCRC 17069 / CCUG 31568 / BM 3577 / RP62A), this protein is Phenylalanine--tRNA ligase beta subunit.